Reading from the N-terminus, the 631-residue chain is Transcription factor dibT (631 aa).

Residues 11–38 constitute a DNA-binding region (zn(2)-C6 fungal-type); sequence CWTCRLRRKRCDSVQPVCGSCQSLEITC. Positions 123-144 are enriched in low complexity; sequence SLADSSASTPSTSSGRPTTLRS. Disordered regions lie at residues 123–148 and 469–488; these read SLAD…SVDR and GLKD…TSAG.

The protein localises to the nucleus. In terms of biological role, transcription factor; part of the gene cluster that mediates the biosynthesis of pestalotiollide B which is part of dibenzodioxocinones, a novel class of inhibitors against cholesterol ester transfer protein (CEPT). Acts as the key transcription factor within the cluster and positively regulates the expression of the cluster genes and the subsequent production of dibenzodioxocinones such as pestalotiollide B, pestalotiollide C, 1',2'-dehydropenicillide, 3'-methoxy-1',2'-dehydropenicillide and 1',2'-epoxy-3',4'-didehydropenicillide. Required for the expression of most PKS genes outside of the dibenzodioxocinones cluster, (43 out of 48 defined PKS genes), and promotes pigmentation of the mycelium and conidia. The protein is Transcription factor dibT of Pestalotiopsis microspora.